The chain runs to 93 residues: Small ribosomal subunit protein uS19 (93 aa).

Belongs to the universal ribosomal protein uS19 family.

Protein S19 forms a complex with S13 that binds strongly to the 16S ribosomal RNA. This chain is Small ribosomal subunit protein uS19, found in Lactobacillus helveticus (strain DPC 4571).